A 359-amino-acid chain; its full sequence is Probable L-ascorbate peroxidase 7, chloroplastic (359 aa).

A chloroplast-targeting transit peptide spans 1-71 (MAAQRLAALH…KAAGSGRSVM (71 aa)). Residue His118 is the Proton acceptor of the active site. His247 serves as a coordination point for heme b. A K(+)-binding site is contributed by Thr248. The segment at 251–277 (RSRPERSGWGKPETKYTKNGPGAPGGQ) is disordered. Over residues 252 to 266 (SRPERSGWGKPETKY) the composition is skewed to basic and acidic residues. Positions 280 and 287 each coordinate K(+).

Belongs to the peroxidase family. Ascorbate peroxidase subfamily. Heme b serves as cofactor. As to expression, expressed in roots, leaves, stems and flowers.

It is found in the plastid. It localises to the chloroplast stroma. The catalysed reaction is L-ascorbate + H2O2 = L-dehydroascorbate + 2 H2O. Its function is as follows. Plays a key role in hydrogen peroxide removal. In Oryza sativa subsp. japonica (Rice), this protein is Probable L-ascorbate peroxidase 7, chloroplastic.